The chain runs to 489 residues: 3-octaprenyl-4-hydroxybenzoate carboxy-lyase (489 aa).

A Mn(2+)-binding site is contributed by N172. Prenylated FMN is bound by residues 175 to 177 (IYR), 189 to 191 (RWL), and 194 to 195 (RG). Mn(2+) is bound at residue E238. The active-site Proton donor is D287.

Belongs to the UbiD family. As to quaternary structure, homohexamer. Requires prenylated FMN as cofactor. Mn(2+) serves as cofactor.

The protein localises to the cell membrane. The catalysed reaction is a 4-hydroxy-3-(all-trans-polyprenyl)benzoate + H(+) = a 2-(all-trans-polyprenyl)phenol + CO2. The protein operates within cofactor biosynthesis; ubiquinone biosynthesis. Functionally, catalyzes the decarboxylation of 3-octaprenyl-4-hydroxy benzoate to 2-octaprenylphenol, an intermediate step in ubiquinone biosynthesis. This Glaesserella parasuis serovar 5 (strain SH0165) (Haemophilus parasuis) protein is 3-octaprenyl-4-hydroxybenzoate carboxy-lyase.